The following is a 314-amino-acid chain: 2,3-dihydroxyphenylpropionate/2,3-dihydroxicinnamic acid 1,2-dioxygenase (314 aa).

The active-site Proton donor is His-115. The active-site Proton acceptor is the His-179.

This sequence belongs to the LigB/MhpB extradiol dioxygenase family. Homotetramer. It depends on Fe(2+) as a cofactor.

The catalysed reaction is 3-(2,3-dihydroxyphenyl)propanoate + O2 = (2Z,4E)-2-hydroxy-6-oxonona-2,4-dienedioate + H(+). It catalyses the reaction (2E)-3-(2,3-dihydroxyphenyl)prop-2-enoate + O2 = (2Z,4E,7E)-2-hydroxy-6-oxonona-2,4,7-trienedioate + H(+). It functions in the pathway aromatic compound metabolism; 3-phenylpropanoate degradation. Its function is as follows. Catalyzes the non-heme iron(II)-dependent oxidative cleavage of 2,3-dihydroxyphenylpropionic acid and 2,3-dihydroxicinnamic acid into 2-hydroxy-6-ketononadienedioate and 2-hydroxy-6-ketononatrienedioate, respectively. The chain is 2,3-dihydroxyphenylpropionate/2,3-dihydroxicinnamic acid 1,2-dioxygenase from Klebsiella pneumoniae subsp. pneumoniae (strain ATCC 700721 / MGH 78578).